We begin with the raw amino-acid sequence, 138 residues long: Basic phospholipase A2 ammodytoxin B (138 aa).

The signal sequence occupies residues 1–16 (MRTLWIVAVCLIGVEG). Cystine bridges form between C42–C131, C44–C60, C59–C111, C65–C138, C66–C104, C73–C97, and C91–C102. Residues Y43, G45, and G47 each contribute to the Ca(2+) site. H63 is an active-site residue. D64 lines the Ca(2+) pocket. D105 is an active-site residue.

This sequence belongs to the phospholipase A2 family. Group II subfamily. D49 sub-subfamily. As to quaternary structure, monomer. Binds to calmodulin, coagulation factor X (F10), M-type PLA2 receptor (R-180), 14-3-3 proteins gamma (YWHAG) and epsilon (YWHAE), and R25, a mitochondrial membrane protein. Requires Ca(2+) as cofactor. In terms of tissue distribution, expressed by the venom gland.

It localises to the secreted. It is found in the host cytoplasm. The protein resides in the host cytosol. It carries out the reaction a 1,2-diacyl-sn-glycero-3-phosphocholine + H2O = a 1-acyl-sn-glycero-3-phosphocholine + a fatty acid + H(+). In terms of biological role, snake venom phospholipase A2 (PLA2) that acts as a presynaptic neurotoxin, an inhibitor of blood coagulation, and has been found to bind with high affinity to intracellular proteins. The response of indirectly stimulated neuromuscular preparations to ammodytoxin (Atx) is triphasic. The first phase, the transient inhibition of the acetylcholine (ACh) release, starts soon after the addition of Atx and lasts for several minutes. This phase is probably independent of Atx enzymatic activity. The effect may be due to the specific binding of the toxin to presynaptic receptors. These receptors, called N-type receptors, are still unidentified. It is noteworthy that a neuronal isoform of the M-type PLA2 receptor (R180) has been identified as a high-affinity receptor for Atx in neuronal plasma membranes. It was demonstrated however that this receptor is not essential for expression of neurotoxicity by Atx. The second phase corresponds to an augmentation of neurotransmitter release. A peak is reached 10-20 minutes after exposure of the preparation to Atx and is followed by a gradual reduction. In this phase, the enzymatic activity of Atx of the mammalian is not significant. It is speculated that the increased release of neurotransmitter in this phase is induced by the interference of Atx with voltage-gated potassium channels. Measurements of ionic currents showed however that voltage-gated potassium channels are not affected by Atx. The third phase of the response of neuromuscular preparations to Atx, which corresponds to a complete and irreversible paralysis, is clearly dependent on the hydrolytic activity of the toxin. In addition to its presynaptic neurotoxicity, Atx shows an anticoagulant activity by binding with high affinity to activated coagulation factor X (F10) thus inhibiting the formation of the prothrombinase complex (FX/FV) and its activity (IC(50) is 82 nM). Surprisingly, Atx was discovered to bind intracellular proteins such as calmodulin (CaM), 14-3-3 proteins gamma (YWHAG) and epsilon (YWHAE) (by similarity with AtxC), as well as R25 (by similarity with AtxC), a mitochondrial integral membrane protein found in cerebral cortex. These findings raised a doubt about the dogma of the exclusively extracellular action of PLA2s, defended by the potential instability of these molecules in the reducing environment of the eukaryotic cytosol coupled with their possible inability to act as enzymes in this cellular compartment, due to too low concentration of calcium ions. This hypothesis was challenged efficiently by demonstrating the internalization of AtxA into a culture cells, but still remains to be directly demonstrated in vivo. PLA2 catalyzes the calcium-dependent hydrolysis of the 2-acyl groups in 3-sn-phosphoglycerides. The sequence is that of Basic phospholipase A2 ammodytoxin B from Vipera ammodytes ammodytes (Western sand viper).